Consider the following 522-residue polypeptide: Peptide chain release factor 3 (522 aa).

The tr-type G domain maps to 9–276 (KKRRTFAIIS…SFVNLAPAPQ (268 aa)). GTP-binding positions include 18–25 (SHPDAGKT), 86–90 (DTPGH), and 140–143 (NKLD).

This sequence belongs to the TRAFAC class translation factor GTPase superfamily. Classic translation factor GTPase family. PrfC subfamily.

The protein localises to the cytoplasm. In terms of biological role, increases the formation of ribosomal termination complexes and stimulates activities of RF-1 and RF-2. It binds guanine nucleotides and has strong preference for UGA stop codons. It may interact directly with the ribosome. The stimulation of RF-1 and RF-2 is significantly reduced by GTP and GDP, but not by GMP. The protein is Peptide chain release factor 3 of Lactobacillus johnsonii (strain CNCM I-12250 / La1 / NCC 533).